A 166-amino-acid polypeptide reads, in one-letter code: ATP synthase subunit b (166 aa).

The helical transmembrane segment at 15–37 threads the bilayer; that stretch reads TLYYLLIFAALLLLVKHFAWGPV.

The protein belongs to the ATPase B chain family. In terms of assembly, F-type ATPases have 2 components, F(1) - the catalytic core - and F(0) - the membrane proton channel. F(1) has five subunits: alpha(3), beta(3), gamma(1), delta(1), epsilon(1). F(0) has three main subunits: a(1), b(2) and c(10-14). The alpha and beta chains form an alternating ring which encloses part of the gamma chain. F(1) is attached to F(0) by a central stalk formed by the gamma and epsilon chains, while a peripheral stalk is formed by the delta and b chains.

The protein resides in the cell membrane. F(1)F(0) ATP synthase produces ATP from ADP in the presence of a proton or sodium gradient. F-type ATPases consist of two structural domains, F(1) containing the extramembraneous catalytic core and F(0) containing the membrane proton channel, linked together by a central stalk and a peripheral stalk. During catalysis, ATP synthesis in the catalytic domain of F(1) is coupled via a rotary mechanism of the central stalk subunits to proton translocation. Its function is as follows. Component of the F(0) channel, it forms part of the peripheral stalk, linking F(1) to F(0). The protein is ATP synthase subunit b of Lactobacillus johnsonii (strain CNCM I-12250 / La1 / NCC 533).